A 389-amino-acid polypeptide reads, in one-letter code: Tryptophan synthase beta chain 1 (389 aa).

An N6-(pyridoxal phosphate)lysine modification is found at Lys-84.

It belongs to the TrpB family. Tetramer of two alpha and two beta chains. It depends on pyridoxal 5'-phosphate as a cofactor.

The protein resides in the plastid. Its subcellular location is the chloroplast. The enzyme catalyses (1S,2R)-1-C-(indol-3-yl)glycerol 3-phosphate + L-serine = D-glyceraldehyde 3-phosphate + L-tryptophan + H2O. Its pathway is amino-acid biosynthesis; L-tryptophan biosynthesis; L-tryptophan from chorismate: step 5/5. Functionally, the beta subunit is responsible for the synthesis of L-tryptophan from indole and L-serine. This Zea mays (Maize) protein is Tryptophan synthase beta chain 1 (TSB1).